The primary structure comprises 416 residues: ASTRA-associated protein 1 (416 aa).

4 WD repeats span residues 13 to 54 (KHET…PFAG), 58 to 95 (ETKA…AVAI), 111 to 147 (VYEV…SESI), and 234 to 273 (HYPE…VNVS).

The protein belongs to the WD repeat ASA1 family. In terms of assembly, component of the ASTRA chromatin remodeling machinery complex.

Its subcellular location is the nucleus. Its function is as follows. Component of the ASTRA complex involved in chromatin remodeling. This is ASTRA-associated protein 1 (ASA1) from Lachancea thermotolerans (strain ATCC 56472 / CBS 6340 / NRRL Y-8284) (Yeast).